The sequence spans 291 residues: Ribosomal RNA small subunit methyltransferase A (291 aa).

S-adenosyl-L-methionine is bound by residues His37, Leu39, Gly64, Glu85, Asp110, and Asn131.

The protein belongs to the class I-like SAM-binding methyltransferase superfamily. rRNA adenine N(6)-methyltransferase family. RsmA subfamily.

The protein localises to the cytoplasm. The catalysed reaction is adenosine(1518)/adenosine(1519) in 16S rRNA + 4 S-adenosyl-L-methionine = N(6)-dimethyladenosine(1518)/N(6)-dimethyladenosine(1519) in 16S rRNA + 4 S-adenosyl-L-homocysteine + 4 H(+). Specifically dimethylates two adjacent adenosines (A1518 and A1519) in the loop of a conserved hairpin near the 3'-end of 16S rRNA in the 30S particle. May play a critical role in biogenesis of 30S subunits. In Dehalococcoides mccartyi (strain ATCC BAA-2266 / KCTC 15142 / 195) (Dehalococcoides ethenogenes (strain 195)), this protein is Ribosomal RNA small subunit methyltransferase A.